A 100-amino-acid polypeptide reads, in one-letter code: NADH-quinone oxidoreductase subunit K (100 aa).

Helical transmembrane passes span 2-22 (IGLS…LMGV), 29-49 (LMLF…FAAI), and 63-83 (FFII…LIVL).

It belongs to the complex I subunit 4L family. As to quaternary structure, NDH-1 is composed of 14 different subunits. Subunits NuoA, H, J, K, L, M, N constitute the membrane sector of the complex.

The protein localises to the cell inner membrane. It catalyses the reaction a quinone + NADH + 5 H(+)(in) = a quinol + NAD(+) + 4 H(+)(out). Its function is as follows. NDH-1 shuttles electrons from NADH, via FMN and iron-sulfur (Fe-S) centers, to quinones in the respiratory chain. The immediate electron acceptor for the enzyme in this species is believed to be ubiquinone. Couples the redox reaction to proton translocation (for every two electrons transferred, four hydrogen ions are translocated across the cytoplasmic membrane), and thus conserves the redox energy in a proton gradient. This is NADH-quinone oxidoreductase subunit K from Sulfurovum sp. (strain NBC37-1).